Reading from the N-terminus, the 103-residue chain is Large ribosomal subunit protein bL21 (103 aa).

This sequence belongs to the bacterial ribosomal protein bL21 family. As to quaternary structure, part of the 50S ribosomal subunit. Contacts protein L20.

Its function is as follows. This protein binds to 23S rRNA in the presence of protein L20. This Paracidovorax citrulli (strain AAC00-1) (Acidovorax citrulli) protein is Large ribosomal subunit protein bL21.